Here is a 409-residue protein sequence, read N- to C-terminus: AP-1-like transcription factor YAP2 (409 aa).

Short sequence motifs (bipartite nuclear localization signal) lie at residues 17–24 and 47–54; these read MKKQMLLN and SRRTAQNR. The disordered stretch occupies residues 26–64; the sequence is DGTPKRKVGRPGRKRIDSEAKSRRTAQNRAAQRAFRDRK. In terms of domain architecture, bZIP spans 43–106; it reads SEAKSRRTAQ…KSLLSEITKY (64 aa). The tract at residues 46-69 is basic motif; the sequence is KSRRTAQNRAAQRAFRDRKEAKMK. The segment at 71–99 is leucine-zipper; sequence LQERVELLEQKDAQNKTTTDFLLCSLKSL. The disordered stretch occupies residues 127 to 156; it reads QKRENEKGTSTAVSKAAKELPSPNSDENMT. Residues 356–387 form a c-CRD region; that stretch reads CYHILEEISSLPKYSSLDIDDLCSELIIKAKC. The Nuclear export signal signature appears at 372–379; it reads LDIDDLCS.

The protein belongs to the bZIP family. YAP subfamily. In terms of assembly, homodimer; disulfide-linked, upon oxidation. Interacts in the nucleus with the nuclear export protein CRM1. Interacts with RCK1. Post-translationally, depending on the oxidative stress inducing agent, CAD1/YAP2 can undergo two distinct conformational changes, both through oxidation of cysteine residues, and both masking the nuclear export signal, thus abolishing nuclear export by CRM1/exportin 1. Peroxide stress induces the formation of possible intramolecular disulfide bonds as well as intermolcular disulfide within a homodimer. Cadmium may bind directly to specific cysteine residues (Cys-391 and either Cys-356 or Cys-387) in the c-CRD.

Its subcellular location is the cytoplasm. It is found in the nucleus. Functionally, transcription activator involved in oxidative stress response and cadmium resistance. Regulates the transcription of genes overrepresented for the function of stabilizing proteins including the inducible Hsp90-family protein HSP82. Preferentially binds to promoters with the core binding site 5'-TTA[CG]TAA-3'. Activity of the transcription factor is controlled through oxidation of specific cysteine residues resulting in the alteration of its subcellular location. Activation by alkyl hydroperoxides or cadmium induces nuclear accumulation and as a result CAD1/YAP2 transcriptional activity. The protein is AP-1-like transcription factor YAP2 of Saccharomyces cerevisiae (strain ATCC 204508 / S288c) (Baker's yeast).